The sequence spans 311 residues: Ribonuclease HIII (311 aa).

The RNase H type-2 domain maps to 95 to 311 (MSIVGSDEVG…NTEKAFRLLK (217 aa)). D101, E102, and D206 together coordinate a divalent metal cation.

The protein belongs to the RNase HII family. RnhC subfamily. Requires Mn(2+) as cofactor. Mg(2+) is required as a cofactor.

Its subcellular location is the cytoplasm. The catalysed reaction is Endonucleolytic cleavage to 5'-phosphomonoester.. In terms of biological role, endonuclease that specifically degrades the RNA of RNA-DNA hybrids. The protein is Ribonuclease HIII of Bacillus cereus (strain ATCC 10987 / NRS 248).